The following is a 285-amino-acid chain: Bifunctional protein FolD (285 aa).

Residues 165–167 and S190 each bind NADP(+); that span reads GRS.

The protein belongs to the tetrahydrofolate dehydrogenase/cyclohydrolase family. In terms of assembly, homodimer.

It catalyses the reaction (6R)-5,10-methylene-5,6,7,8-tetrahydrofolate + NADP(+) = (6R)-5,10-methenyltetrahydrofolate + NADPH. The catalysed reaction is (6R)-5,10-methenyltetrahydrofolate + H2O = (6R)-10-formyltetrahydrofolate + H(+). Its pathway is one-carbon metabolism; tetrahydrofolate interconversion. Its function is as follows. Catalyzes the oxidation of 5,10-methylenetetrahydrofolate to 5,10-methenyltetrahydrofolate and then the hydrolysis of 5,10-methenyltetrahydrofolate to 10-formyltetrahydrofolate. This Staphylococcus carnosus (strain TM300) protein is Bifunctional protein FolD.